The primary structure comprises 30 residues: Scolopendra 20528.11 Da toxin (30 aa).

The protein belongs to the CRISP family. Venom allergen 5-like subfamily. Post-translationally, contains 3 disulfide bonds. Expressed by the venom gland.

It is found in the secreted. This is Scolopendra 20528.11 Da toxin from Scolopendra angulata (Barbados giant red centipede).